The chain runs to 296 residues: MGNQKLKWTAEEEEALLAGVRKHGPGKWKNILRDPELAEQLSSRSNIDLKDKWRNLSVAPGIQGSKDKIRTPKIKAAAFHLAAAAAAAIVTPTHSGHSSPVATLPRSGSSDLSIDDSFNIVADPKNAPRYDGMIFEALSNLTDANGSDVSAIFNFIEQRQEVPPNFRRMLSSRLRRLAAQGKLEKVSHLKSTQNFYKMNDNSLVQRTPHVARPKESNTKSRQQTNSQGPSISQQIVEASITAAYKLVEVENKLDVSKGAAEEIERLMKLAEEADEMLVIAREMHEECSQGKIMYLN.

Residues 1–62 (MGNQKLKWTA…WRNLSVAPGI (62 aa)) form the HTH myb-type domain. Residues 28-58 (WKNILRDPELAEQLSSRSNIDLKDKWRNLSV) constitute a DNA-binding region (H-T-H motif). The region spanning 126–200 (NAPRYDGMIF…STQNFYKMND (75 aa)) is the H15 domain. The interval 197-232 (KMNDNSLVQRTPHVARPKESNTKSRQQTNSQGPSIS) is disordered. Residues 219–232 (KSRQQTNSQGPSIS) show a composition bias toward polar residues. Residues 245-282 (KLVEVENKLDVSKGAAEEIERLMKLAEEADEMLVIARE) adopt a coiled-coil conformation.

It belongs to the histone H1/H5 family. SMH subfamily.

Its subcellular location is the nucleus. The protein localises to the chromosome. Binds preferentially double-stranded telomeric repeats. The chain is Telomere repeat-binding factor 4 from Arabidopsis thaliana (Mouse-ear cress).